Here is a 418-residue protein sequence, read N- to C-terminus: Diacylglycerol O-acyltransferase 1 (418 aa).

Positions 1-30 (MSGTFNDIRRRKKEEGSPTAGITERHENKS) are disordered. Residues 1–71 (MSGTFNDIRR…LAVAWHTSSF (71 aa)) are Cytoplasmic-facing. Ser-17 is subject to Phosphoserine. Residues 72-92 (VLFSIFTLFAISTPALWVLAI) traverse the membrane as a helical segment. The Lumenal segment spans residues 93–186 (PYMIYFFFDR…DYRNQECTGP (94 aa)). Asn-173 is a glycosylation site (N-linked (GlcNAc...) asparagine). Residues 187–207 (TYLFGYHPHGIGALGAFGAFA) form a helical membrane-spanning segment. At 208–215 (TEGCNYSK) the chain is on the cytoplasmic side. Residues 216 to 236 (IFPGIPISLMTLVTQFHIPLY) form a helical membrane-spanning segment. Residues 237–289 (RDYLLALGISSVSRKNALRTLSKNQSICIVVGGARESLLSSTNGTQLILNKRK) lie on the Lumenal side of the membrane. Asn-260 and Asn-279 each carry an N-linked (GlcNAc...) asparagine glycan. A helical membrane pass occupies residues 290 to 310 (GFIKLAIQTGNINLVPVFAFG). Residues 311–418 (EVDCYNVLST…VPDAELKIVG (108 aa)) are Cytoplasmic-facing.

It belongs to the diacylglycerol acyltransferase family.

The protein resides in the lipid droplet. The protein localises to the endoplasmic reticulum membrane. It catalyses the reaction an acyl-CoA + a 1,2-diacyl-sn-glycerol = a triacyl-sn-glycerol + CoA. The catalysed reaction is a 2-acylglycerol + an acyl-CoA = a 1,2-diacylglycerol + CoA. It carries out the reaction 2-(9Z-octadecenoyl)-glycerol + (9Z)-octadecenoyl-CoA = 1,2-di-(9Z-octadecenoyl)-glycerol + CoA. The protein operates within glycerolipid metabolism; triacylglycerol biosynthesis. Its function is as follows. Catalyzes the terminal and only committed step in triacylglycerol (TAG) synthesis by using diacylglycerol (DAG) and fatty acyl-CoA as substrates. Required for storage lipid synthesis. Major DAG esterifying enzyme in stationary phase when TAG production is particularly active. Involved in lipid particle synthesis from the endoplasmic reticulum, promoting localized TAG production at discrete ER subdomains, and in ergosterol biosynthesis. Also has monoacylglycerol acyltransferase (MGAT) activity, catalyzing the acyl-CoA-dependent esterification of monoacylglycerol to diacylglycerol. Can also utilize ceramide instead of DAG, acylating the ceramides by attaching a fatty acid to the hydroxy group on the first carbon atom of the long-chain base to produce 1-O-acylceramides. In Saccharomyces cerevisiae (strain ATCC 204508 / S288c) (Baker's yeast), this protein is Diacylglycerol O-acyltransferase 1 (DGA1).